The chain runs to 361 residues: MTNIDAPVTVQVAVDPPYPVVIGTGLSDQLDELLANRHRVAILHQPVLTQTAEAIRSHLAGKGVDAHRIEIPDAEAGKDLSVMDFIWEVLGRIGIGRKDALVSFGGGAATDVAGFAAATWLRGVSIVHVPTTLLGMVDAAVGGKTGINTEAGKNLVGAFHQPLAVLADLATLETLPRKEIASGMAEVVKAGFIADPIILDLIEADPQASLDPMGGVLPELIRRAVTVKAGVVSADEKESELREILNYGHTLAHAIERRERYEWRHGAAVSVGLVFAAELARVAGRLDDATAQRHHTILTSLGLPVSYDADALPQLLEYMAGDKKTRAGVLRFVILDGLAKPGRLVGPDPGLLVTAYAGLSA.

NAD(+) is bound by residues 73–78 (DAEAGK), 107–111 (GAATD), 131–132 (TT), K144, K153, and 171–174 (TLET). Zn(2+) is bound by residues E186, H249, and H265.

Belongs to the sugar phosphate cyclases superfamily. Dehydroquinate synthase family. Requires NAD(+) as cofactor. Co(2+) is required as a cofactor. Zn(2+) serves as cofactor.

It localises to the cytoplasm. It carries out the reaction 7-phospho-2-dehydro-3-deoxy-D-arabino-heptonate = 3-dehydroquinate + phosphate. Its pathway is metabolic intermediate biosynthesis; chorismate biosynthesis; chorismate from D-erythrose 4-phosphate and phosphoenolpyruvate: step 2/7. In terms of biological role, catalyzes the conversion of 3-deoxy-D-arabino-heptulosonate 7-phosphate (DAHP) to dehydroquinate (DHQ). This is 3-dehydroquinate synthase from Mycobacterium leprae (strain TN).